Here is a 241-residue protein sequence, read N- to C-terminus: 1-(5-phosphoribosyl)-5-[(5-phosphoribosylamino)methylideneamino] imidazole-4-carboxamide isomerase (241 aa).

The active-site Proton acceptor is D10. The active-site Proton donor is D131.

It belongs to the HisA/HisF family.

The protein resides in the cytoplasm. It catalyses the reaction 1-(5-phospho-beta-D-ribosyl)-5-[(5-phospho-beta-D-ribosylamino)methylideneamino]imidazole-4-carboxamide = 5-[(5-phospho-1-deoxy-D-ribulos-1-ylimino)methylamino]-1-(5-phospho-beta-D-ribosyl)imidazole-4-carboxamide. The protein operates within amino-acid biosynthesis; L-histidine biosynthesis; L-histidine from 5-phospho-alpha-D-ribose 1-diphosphate: step 4/9. In Bifidobacterium longum subsp. infantis (strain ATCC 15697 / DSM 20088 / JCM 1222 / NCTC 11817 / S12), this protein is 1-(5-phosphoribosyl)-5-[(5-phosphoribosylamino)methylideneamino] imidazole-4-carboxamide isomerase.